A 277-amino-acid chain; its full sequence is F420-dependent methylenetetrahydromethanopterin dehydrogenase (277 aa).

The tract at residues 249–277 is disordered; that stretch reads EKATDSVSRKPHGADGKRLNKTKLMEKPE.

The protein belongs to the MTD family.

The enzyme catalyses 5,10-methylenetetrahydromethanopterin + oxidized coenzyme F420-(gamma-L-Glu)(n) + 2 H(+) = 5,10-methenyl-5,6,7,8-tetrahydromethanopterin + reduced coenzyme F420-(gamma-L-Glu)(n). The protein operates within one-carbon metabolism; methanogenesis from CO(2); 5,10-methylene-5,6,7,8-tetrahydromethanopterin from 5,10-methenyl-5,6,7,8-tetrahydromethanopterin (coenzyme F420 route): step 1/1. Functionally, catalyzes the reversible reduction of methenyl-H(4)MPT(+) to methylene-H(4)MPT. This is F420-dependent methylenetetrahydromethanopterin dehydrogenase from Methanococcus aeolicus (strain ATCC BAA-1280 / DSM 17508 / OCM 812 / Nankai-3).